Here is a 928-residue protein sequence, read N- to C-terminus: Diacylglycerol kinase zeta (928 aa).

Residues methionine 1 to aspartate 14 show a composition bias toward basic and acidic residues. Disordered stretches follow at residues methionine 1–proline 46 and lysine 59–glutamine 82. The segment covering serine 15–glycine 24 has biased composition (low complexity). Positions serine 25 to proline 37 are enriched in basic and acidic residues. 2 consecutive Phorbol-ester/DAG-type zinc fingers follow at residues histidine 98–cysteine 152 and histidine 172–cysteine 230. A disordered region spans residues proline 251–tryptophan 280. The segment covering alanine 257–lysine 272 has biased composition (basic residues). The MARCKS homology stretch occupies residues lysine 259–lysine 273. Positions glycine 278–leucine 416 are mediates interaction with RASGRP1. The DAGKc domain occupies proline 291–proline 425. The Nuclear export signal signature appears at leucine 361 to leucine 369. Serine 705 carries the phosphoserine modification. The interval alanine 759–proline 788 is disordered. A compositionally biased stretch (pro residues) spans leucine 763–proline 777. Residue serine 781 is modified to Phosphoserine. 2 ANK repeats span residues glutamine 822–aspartate 852 and asparagine 857–lysine 886. The PDZ-binding motif lies at glutamine 924 to valine 928.

It belongs to the eukaryotic diacylglycerol kinase family. Interacts (via PDZ-binding motif) with the PDZ domain of the syntrophin SNTG1 and that of SNX27. Interacts with IRS1 in the absence of insulin; insulin stimulation decreases this interaction. Found in a ternary complex with IRS1 and PIP5K1A in the absence of insulin. Interacts with PIP5K1A. As to quaternary structure, forms a signaling complex with RASGRP1 and HRAS. In terms of processing, phosphorylation of the MARCKS homology domain by PKC reduces nuclear accumulation of DGK-zeta. In terms of tissue distribution, highest levels in brain, and substantial levels in skeletal muscle, heart, and pancreas. Predominantly expressed in muscle.

It is found in the nucleus. The protein localises to the cytoplasm. The protein resides in the cytosol. It localises to the cell membrane. Its subcellular location is the cell projection. It is found in the lamellipodium. It carries out the reaction a 1,2-diacyl-sn-glycerol + ATP = a 1,2-diacyl-sn-glycero-3-phosphate + ADP + H(+). The enzyme catalyses a 1-O-alkyl-sn-glycerol + ATP = a 1-O-alkyl-sn-glycero-3-phosphate + ADP + H(+). It catalyses the reaction 1-O-alkyl-2-acyl-sn-glycerol + ATP = 1-O-alkyl-2-acyl-sn-glycero-3-phosphate + ADP + H(+). The catalysed reaction is 1,2-didecanoyl-sn-glycerol + ATP = 1,2-didecanoyl-sn-glycero-3-phosphate + ADP + H(+). It carries out the reaction 1,2-ditetradecanoyl-sn-glycerol + ATP = 1,2-ditetradecanoyl-sn-glycero-3-phosphate + ADP + H(+). The enzyme catalyses 1-hexadecanoyl-2-(9Z-octadecenoyl)-sn-glycerol + ATP = 1-hexadecanoyl-2-(9Z-octadecenoyl)-sn-glycero-3-phosphate + ADP + H(+). It catalyses the reaction 1-hexadecanoyl-2-(5Z,8Z,11Z,14Z-eicosatetraenoyl)-sn-glycerol + ATP = 1-hexadecanoyl-2-(5Z,8Z,11Z,14Z-eicosatetraenoyl)-sn-glycero-3-phosphate + ADP + H(+). The catalysed reaction is 1-octadecanoyl-2-(9Z-octadecenoyl)-sn-glycerol + ATP = 1-octadecanoyl-2-(9Z-octadecenoyl)-sn-glycero-3-phosphate + ADP + H(+). It carries out the reaction 1-octadecanoyl-2-(5Z,8Z,11Z,14Z-eicosatetraenoyl)-sn-glycerol + ATP = 1-octadecanoyl-2-(5Z,8Z,11Z,14Z-eicosatetraenoyl)-sn-glycero-3-phosphate + ADP + H(+). The enzyme catalyses 1-octadecanoyl-2-(4Z,7Z,10Z,13Z,16Z,19Z-docosahexaenoyl)-sn-glycerol + ATP = 1-octadecanoyl-2-(4Z,7Z,10Z,13Z,16Z,19Z-docosahexaenoyl)-sn-glycero-3-phosphate + ADP + H(+). It catalyses the reaction 1,2-di-(9Z-octadecenoyl)-sn-glycerol + ATP = 1,2-di-(9Z-octadecenoyl)-sn-glycero-3-phosphate + ADP + H(+). The catalysed reaction is 1-(9Z-octadecenoyl)-2-hexadecanoyl-sn-glycerol + ATP = 1-(9Z)-octadecenoyl-2-hexadecanoyl-sn-glycero-3-phosphate + ADP + H(+). It carries out the reaction 1-eicosanoyl-2-(5Z,8Z,11Z,14Z)-eicosatetraenoyl-sn-glycerol + ATP = 1-eicosanoyl-2-(5Z,8Z,11Z,14Z)-eicosatetraenoyl-sn-glycero-3-phosphate + ADP + H(+). The enzyme catalyses 1,2-di-(5Z,8Z,11Z,14Z)-eicosatetraenoyl-sn-glycerol + ATP = 1,2-di-(5Z,8Z,11Z,14Z)-eicosatetraenoyl-sn-glycero-3-phosphate + ADP + H(+). It catalyses the reaction 1-O-hexadecyl-2-acetyl-sn-glycerol + ATP = 1-O-hexadecyl-2-acetyl-sn-glycero-3-phosphate + ADP + H(+). The catalysed reaction is 1-O-hexadecyl-2-(5Z,8Z,11Z,14Z-eicosatetraenoyl)-sn-glycerol + ATP = 1-O-hexadecyl-2-(5Z,8Z,11Z,14Z-eicosatetraenoyl)-sn-glycero-3-phosphate + ADP + H(+). It carries out the reaction 1-O-hexadecyl-2-(9Z-octadecenoyl)-sn-glycerol + ATP = 1-O-hexadecyl-2-(9Z-octadecenoyl)-sn-glycero-3-phosphate + ADP + H(+). The enzyme catalyses 1-O-hexadecyl-sn-glycerol + ATP = 1-O-hexadecyl-sn-glycero-3-phosphate + ADP + H(+). The protein operates within lipid metabolism; glycerolipid metabolism. With respect to regulation, activated by 1,2-diacyl-sn-glycero-3-phosphate/phosphatidic acid irrespective of its acyl chain composition. Functionally, diacylglycerol kinase that converts diacylglycerol/DAG into phosphatidic acid/phosphatidate/PA and regulates the respective levels of these two bioactive lipids. Thereby, acts as a central switch between the signaling pathways activated by these second messengers with different cellular targets and opposite effects in numerous biological processes. Also plays an important role in the biosynthesis of complex lipids. Does not exhibit an acyl chain-dependent substrate specificity among diacylglycerol species. Can also phosphorylate 1-alkyl-2-acylglycerol in vitro but less efficiently and with a preference for alkylacylglycerols containing an arachidonoyl group. The biological processes it is involved in include T cell activation since it negatively regulates T-cell receptor signaling which is in part mediated by diacylglycerol. By generating phosphatidic acid, stimulates PIP5KIA activity which regulates actin polymerization. Through the same mechanism could also positively regulate insulin-induced translocation of SLC2A4 to the cell membrane. Regulates RASGRP1 activity. Its function is as follows. Does not regulate RASGRP1 activity. In Homo sapiens (Human), this protein is Diacylglycerol kinase zeta.